The primary structure comprises 2515 residues: Protein tudor (2515 aa).

S226, S235, and S239 each carry phosphoserine. 2 consecutive Tudor domains span residues 455 to 513 (APEL…LLEI) and 641 to 696 (QLIL…HLEM). S800 carries the post-translational modification Phosphoserine. The segment at 840–996 (QAVKSVSGSK…SSSESVAAAK (157 aa)) is disordered. The span at 890 to 900 (STGSYSSGMSS) shows a compositional bias: low complexity. Residues 906 to 917 (RQQNGRTPIQSP) show a composition bias toward polar residues. Residues 918 to 927 (RHNEKQEAKK) show a composition bias toward basic and acidic residues. Composition is skewed to polar residues over residues 943-954 (GQQGNQRSQNAP) and 964-976 (QKST…SSKR). Low complexity predominate over residues 977-995 (SSGVGSDIASSSSESVAAA). Tudor domains lie at 1062 to 1122 (QLKV…FADP) and 1355 to 1414 (KFDV…FYEH). The segment at 1515–1589 (EEDKGRKETV…KPATPVPEVV (75 aa)) is disordered. Basic and acidic residues predominate over residues 1540-1553 (NDKDREPKKSKPAE). The span at 1569-1584 (SPVPAEPAPVPKPATP) shows a compositional bias: pro residues. 5 Tudor domains span residues 1662-1718 (NVVN…SHIE), 1839-1898 (GFEK…SLPS), 2023-2082 (KAAV…LIKP), 2211-2269 (TTNS…PIPS), and 2392-2451 (DLKE…KPAR).

May form part of a piRNA processing complex consisting of tud, aub and AGO3. Interacts with AGO3 (when symmetrically dimethylated on Arg residues) and aub (when symmetrically dimethylated on Arg residues). Interacts with vls. Interacts with me31B/DDX6 (when symmetrically dimethylated on Arg residues).

It localises to the cytoplasm. The protein localises to the perinuclear region. It is found in the cytoplasmic ribonucleoprotein granule. May act via the Piwi-interacting RNA (piRNA) metabolic process mediated by aub and AGO3 Piwi proteins, which mediates the repression of transposable elements during meiosis by forming complexes composed of piRNAs and Piwi proteins and governs the methylation and subsequent repression of transposons. Required during oogenesis for the formation of primordial germ cells and for normal abdominal segmentation. Not involved in repression of retroelements. The sequence is that of Protein tudor from Drosophila melanogaster (Fruit fly).